The chain runs to 213 residues: Probable septum site-determining protein MinC (213 aa).

Belongs to the MinC family. In terms of assembly, interacts with MinD and FtsZ.

Its function is as follows. Cell division inhibitor that blocks the formation of polar Z ring septums. Rapidly oscillates between the poles of the cell to destabilize FtsZ filaments that have formed before they mature into polar Z rings. Prevents FtsZ polymerization. This is Probable septum site-determining protein MinC from Clostridium botulinum (strain Eklund 17B / Type B).